The chain runs to 464 residues: Neuronal acetylcholine receptor subunit beta-3 (464 aa).

Residues 1 to 30 (MTGFLRVFLVLSATLSGSWVTLTATAGLSS) form the signal peptide. Residues 31–238 (VAEHEDALLR…VTYSFVLRRL (208 aa)) are Extracellular-facing. N-linked (GlcNAc...) asparagine glycosylation is found at N55 and N172. C159 and C173 are oxidised to a cystine. The next 3 helical transmembrane spans lie at 239 to 263 (PLFY…VFYL), 271 to 288 (LSLS…LLVI), and 305 to 326 (YLLF…VINV). The Cytoplasmic portion of the chain corresponds to 327–434 (HHRSSSTYHP…WKFVAQVLDR (108 aa)). Residues 435 to 453 (IFLWLFLIASVLGSILIFI) form a helical membrane-spanning segment.

Belongs to the ligand-gated ion channel (TC 1.A.9) family. Acetylcholine receptor (TC 1.A.9.1) subfamily. Beta-3/CHRNB3 sub-subfamily. Neuronal AChR seems to be composed of two different type of subunits: alpha and beta. CHRNB3/beta-3 subunit is only able to form functional nAChRs when co-assembled with another beta subunit. Participates in pentameric assemblies along with CHRNA4/alpha-4 and CHRNB2/beta-2 subunits and with CHRNA6/alpha-6 as well, forming stoichiometries such as (CHRNA3:CHRNB4)2:CHRNB3, (CHRNA4:CHRNB2)2:CHRNB3 or (CHRNA6:CHRNB2)2:CHRNB3.

It localises to the synaptic cell membrane. Its subcellular location is the cell membrane. It carries out the reaction Ca(2+)(in) = Ca(2+)(out). It catalyses the reaction K(+)(in) = K(+)(out). The enzyme catalyses Na(+)(in) = Na(+)(out). Its activity is regulated as follows. Activated by a myriad of ligands such as acetylcholine, cytisine, nicotine, choline and epibatidine. Component of neuronal acetylcholine receptors (nAChRs) that function as pentameric, ligand-gated cation channels with high calcium permeability among other activities. nAChRs are excitatory neurotrasnmitter receptors formed by a collection of nAChR subunits known to mediate synaptic transmission in the nervous system and the neuromuscular junction. Each nAchR subunit confers differential attributes to channel properties, including activation, deactivation and desensitization kinetics, pH sensitivity, cation permeability, and binding to allosteric modulators. Has an accessory rather than functional role and is only able to form functional nAChRs when co-assembled with another beta subunit. Participates in pentameric assemblies along with CHRNA3, CHRNA4, CHRNA6, CHRNB2 and CHRNB4. Modulates receptor assembly and increases receptor sensitivity to nicotine when associated with CHRNB2, CHRNA4 and/or CHRNA6 as well as CHRNA3 and CHRNB4. Seems to play a role in nicotine addiction. The sequence is that of Neuronal acetylcholine receptor subunit beta-3 (Chrnb3) from Rattus norvegicus (Rat).